The primary structure comprises 511 residues: GMP synthase [glutamine-hydrolyzing] (511 aa).

The Glutamine amidotransferase type-1 domain occupies 5–195 (LILVLDFGGQ…LYKICGCSGD (191 aa)). The Nucleophile role is filled by C82. Active-site residues include H169 and E171. Residues 196-386 (WKMASFIEHS…LGIPEDIVMR (191 aa)) enclose the GMPS ATP-PPase domain. 223 to 229 (SGGVDSS) is an ATP binding site.

In terms of assembly, homodimer.

The catalysed reaction is XMP + L-glutamine + ATP + H2O = GMP + L-glutamate + AMP + diphosphate + 2 H(+). Its pathway is purine metabolism; GMP biosynthesis; GMP from XMP (L-Gln route): step 1/1. Functionally, catalyzes the synthesis of GMP from XMP. The polypeptide is GMP synthase [glutamine-hydrolyzing] (Acetivibrio thermocellus (strain ATCC 27405 / DSM 1237 / JCM 9322 / NBRC 103400 / NCIMB 10682 / NRRL B-4536 / VPI 7372) (Clostridium thermocellum)).